Reading from the N-terminus, the 618-residue chain is NAD(P)H-quinone oxidoreductase subunit 5, organellar chromatophore 2 (618 aa).

Transmembrane regions (helical) follow at residues 16–36 (LIPI…TGWI), 43–63 (TPAY…SLAL), 99–119 (LAAL…ALGY), 129–149 (FFAL…SDSL), 152–172 (SYFL…FWYA), 190–210 (GDVM…GMEF), 220–240 (NTLT…GPIG), 267–287 (SVVV…LHHS), 291–311 (IAVL…VSIA), 318–335 (TLSY…IAIA), 348–368 (AHAI…AVSN), 390–410 (LIAG…CFGL), 419–438 (APWF…LNLT), 461–481 (WQMA…PWMM), 495–515 (AITG…GAIV), 553–573 (IVSG…NGFV), and 597–617 (SYIL…SWLV).

This sequence belongs to the complex I subunit 5 family. As to quaternary structure, NDH is composed of at least 16 different subunits, 5 of which are encoded in the nucleus.

It is found in the plastid. It localises to the organellar chromatophore thylakoid membrane. It catalyses the reaction a plastoquinone + NADH + (n+1) H(+)(in) = a plastoquinol + NAD(+) + n H(+)(out). The enzyme catalyses a plastoquinone + NADPH + (n+1) H(+)(in) = a plastoquinol + NADP(+) + n H(+)(out). NDH shuttles electrons from NAD(P)H:plastoquinone, via FMN and iron-sulfur (Fe-S) centers, to quinones in the photosynthetic chain and possibly in a chloroplast respiratory chain. The immediate electron acceptor for the enzyme in this species is believed to be plastoquinone. Couples the redox reaction to proton translocation, and thus conserves the redox energy in a proton gradient. In Paulinella chromatophora, this protein is NAD(P)H-quinone oxidoreductase subunit 5, organellar chromatophore 2 (ndhF2).